Consider the following 417-residue polypeptide: Probable serpin E3 (417 aa).

A signal peptide spans 1 to 24 (MPQLSASSLFICLWLVDLCHVANS). N-linked (GlcNAc...) asparagine glycosylation is found at Asn50, Asn106, Asn140, Asn147, and Asn152.

The protein belongs to the serpin family.

Its subcellular location is the secreted. Probable serine protease inhibitor. This Danio rerio (Zebrafish) protein is Probable serpin E3 (serpine3).